A 1111-amino-acid chain; its full sequence is Serine/threonine-protein kinase Nek10 (1111 aa).

Residues 1 to 16 are compositionally biased toward basic and acidic residues; that stretch reads MPDQDTKAKSTEKTAD. 2 disordered regions span residues 1–24 and 47–72; these read MPDQ…TTTR and AINF…HRAR. A compositionally biased stretch (polar residues) spans 47 to 63; it reads AINFDSAQNNMTKSEPT. Residues 481–514 are a coiled coil; sequence YKDLVSQLNLLLEDELKQIAENIESINQKKAPLK. Residues 519-791 form the Protein kinase domain; that stretch reads YAVLDHLGSG…MISDVMMKYL (273 aa). ATP-binding positions include 525 to 533 and Lys-548; that span reads LGSGAFGCV. Residue Asp-655 is the Proton acceptor of the active site.

This sequence belongs to the protein kinase superfamily. NEK Ser/Thr protein kinase family. NIMA subfamily. Interacts with RAF1 and MAP2K1; the interaction is direct with RAF1 and required for ERK1/2-signaling pathway activation in response to UV irradiation. Mg(2+) is required as a cofactor. As to expression, expressed in the mammary gland, lung, spleen, and kidney.

The enzyme catalyses L-seryl-[protein] + ATP = O-phospho-L-seryl-[protein] + ADP + H(+). It carries out the reaction L-threonyl-[protein] + ATP = O-phospho-L-threonyl-[protein] + ADP + H(+). Plays a role in the cellular response to UV irradiation. Mediates G2/M cell cycle arrest, MEK autoactivation and ERK1/2-signaling pathway activation in response to UV irradiation. In ciliated cells, it is involved in the regulation of mucociliary transport. The sequence is that of Serine/threonine-protein kinase Nek10 from Mus musculus (Mouse).